A 201-amino-acid polypeptide reads, in one-letter code: Large ribosomal subunit protein uL4 (201 aa).

The interval 43–73 (TRAQKTRSEVSGGGAKPWRQKGTGRARAGTT) is disordered.

It belongs to the universal ribosomal protein uL4 family. Part of the 50S ribosomal subunit.

Its function is as follows. One of the primary rRNA binding proteins, this protein initially binds near the 5'-end of the 23S rRNA. It is important during the early stages of 50S assembly. It makes multiple contacts with different domains of the 23S rRNA in the assembled 50S subunit and ribosome. Forms part of the polypeptide exit tunnel. The polypeptide is Large ribosomal subunit protein uL4 (Colwellia psychrerythraea (strain 34H / ATCC BAA-681) (Vibrio psychroerythus)).